The sequence spans 492 residues: Trypanothione reductase (492 aa).

Residue D36–T52 coordinates FAD. The cysteines at positions 53 and 58 are disulfide-linked. Catalysis depends on H461, which acts as the Proton acceptor.

Belongs to the class-I pyridine nucleotide-disulfide oxidoreductase family. As to quaternary structure, homodimer. FAD is required as a cofactor.

It is found in the cytoplasm. It catalyses the reaction trypanothione + NADP(+) = trypanothione disulfide + NADPH + H(+). Functionally, trypanothione is the parasite analog of glutathione; this enzyme is the equivalent of glutathione reductase. The chain is Trypanothione reductase (TPR) from Trypanosoma cruzi.